Consider the following 160-residue polypeptide: Type IV major fimbrial protein FimA (160 aa).

Positions 1–7 are cleaved as a propeptide — leader sequence; the sequence is MKSLQKG. Residue Phe8 is modified to N-methylphenylalanine. A helical transmembrane segment spans residues 8–28; the sequence is FTLIELMIVVAIIGILAAFAI. Cysteines 63 and 105 form a disulfide.

It belongs to the N-Me-Phe pilin family. As to quaternary structure, the pili are polar flexible filaments of about 5.4 nanometers diameter and 2.5 micrometers average length; they consist of only a single polypeptide chain arranged in a helical configuration of five subunits per turn in the assembled pilus.

The protein localises to the fimbrium. It localises to the membrane. Its function is as follows. Major component of the type IV fimbriae that plays an essential role in twitching motility, natural transformation, and protease secretion. In Dichelobacter nodosus (Bacteroides nodosus), this protein is Type IV major fimbrial protein FimA (fimA).